Reading from the N-terminus, the 107-residue chain is Nucleoid-associated protein A1G_07310 (107 aa).

The protein belongs to the YbaB/EbfC family. Homodimer.

The protein localises to the cytoplasm. It localises to the nucleoid. Functionally, binds to DNA and alters its conformation. May be involved in regulation of gene expression, nucleoid organization and DNA protection. The chain is Nucleoid-associated protein A1G_07310 from Rickettsia rickettsii (strain Sheila Smith).